A 536-amino-acid polypeptide reads, in one-letter code: MNITPVSKNTTEPLACIENIDNHIYDYSPSNEEPKYLKRSKSESTTKLSRQLPRTPSNKYHARNKRRPYSTTPPISLNIPSSPFIHSEFSLNSSSSESSDLESLPDLSEDRDTPFSSPINRNPLTPNNSFFSFTKKNGPIECLLPKRTQISIFEIPEIVYKIVEFADIQNTAVPQEGTPIRRKPLSSNHALLIYGDKKQAELSLQDHYDEHNNDGMLFNCLQVNKLFNQVTTEIISQKFFFSDEMKLHSFLQNLKITQIKSKPSLFVFHKLFHAKQDIIELIKSHMDFSNLQWLEFYMCPKLLPTPEFLSCGTKIKKIVITGSKVIDDGFLSMVAKKCPNLEVLDIRACELISDSGIYQIAKRCTKLTTVNFGRKNKGNLITDSSICILIRNNPNLKTVGLAGCHITDKTLWDLAIRCSDHLQRLSLNNCPHITNQSIPLILHSNLFKNISVLELRFANQITNFKPIIEFKRRQEFRGISILIEVCESLCLMMREQELEMDKVISQRIFEDISYWANDNNDGDVPYQSFINSRRHK.

Disordered regions lie at residues 27-77 and 94-123; these read YSPS…PISL and SSSE…NRNP. Residues 32-44 are compositionally biased toward basic and acidic residues; the sequence is EEPKYLKRSKSES. The segment covering 45–58 has biased composition (polar residues); sequence TTKLSRQLPRTPSN. Positions 94–106 are enriched in low complexity; the sequence is SSSESSDLESLPD. Polar residues predominate over residues 114 to 123; sequence PFSSPINRNP.

The protein belongs to the AMN1 family.

Its subcellular location is the cytoplasm. The protein resides in the nucleus. In terms of biological role, negative regulator of the mitotic exit network (MEN), required for multiple cell cycle checkpoints. Required for daughter cell separation and chromosome stability. Involved in copper sensitivity. The protein is Antagonist of mitotic exit network protein 1 (AMN1) of Debaryomyces hansenii (strain ATCC 36239 / CBS 767 / BCRC 21394 / JCM 1990 / NBRC 0083 / IGC 2968) (Yeast).